The sequence spans 343 residues: Twinfilin (343 aa).

ADF-H domains lie at 11–135 (EQLA…EGYR) and 184–312 (EATV…DELH). Residues 319-343 (RPAFAKPKGPPNRGAKRLTRPTAED) are disordered.

This sequence belongs to the actin-binding proteins ADF family. Twinfilin subfamily. In terms of assembly, interacts with G-actin; ADP-actin form.

The protein localises to the cytoplasm. The protein resides in the cytoskeleton. It localises to the cell cortex. Actin-binding protein involved in motile and morphological processes. Inhibits actin polymerization, likely by sequestering G-actin. The chain is Twinfilin (twf) from Drosophila melanogaster (Fruit fly).